Consider the following 355-residue polypeptide: Erythronate-4-phosphate dehydrogenase (355 aa).

Residues S45 and T66 each contribute to the substrate site. D146 contacts NAD(+). R206 is an active-site residue. Residue D229 participates in NAD(+) binding. E234 is a catalytic residue. The active-site Proton donor is H251. An NAD(+)-binding site is contributed by G254. A substrate-binding site is contributed by Y255.

Belongs to the D-isomer specific 2-hydroxyacid dehydrogenase family. PdxB subfamily. In terms of assembly, homodimer.

It is found in the cytoplasm. It catalyses the reaction 4-phospho-D-erythronate + NAD(+) = (R)-3-hydroxy-2-oxo-4-phosphooxybutanoate + NADH + H(+). It functions in the pathway cofactor biosynthesis; pyridoxine 5'-phosphate biosynthesis; pyridoxine 5'-phosphate from D-erythrose 4-phosphate: step 2/5. Its function is as follows. Catalyzes the oxidation of erythronate-4-phosphate to 3-hydroxy-2-oxo-4-phosphonooxybutanoate. In Acinetobacter baumannii (strain ATCC 17978 / DSM 105126 / CIP 53.77 / LMG 1025 / NCDC KC755 / 5377), this protein is Erythronate-4-phosphate dehydrogenase.